The chain runs to 178 residues: Large ribosomal subunit protein uL6 (178 aa).

This sequence belongs to the universal ribosomal protein uL6 family. Part of the 50S ribosomal subunit.

Its function is as follows. This protein binds to the 23S rRNA, and is important in its secondary structure. It is located near the subunit interface in the base of the L7/L12 stalk, and near the tRNA binding site of the peptidyltransferase center. This is Large ribosomal subunit protein uL6 from Helicobacter pylori (strain J99 / ATCC 700824) (Campylobacter pylori J99).